The primary structure comprises 333 residues: Ketol-acid reductoisomerase (NADP(+)) (333 aa).

Residues 6-186 form the KARI N-terminal Rossmann domain; the sequence is TRVYTECDAD…GALRAGAIQT (181 aa). Residues 29–32, lysine 52, serine 55, serine 57, and 87–90 each bind NADP(+); these read YGSQ and DPAQ. Histidine 112 is a catalytic residue. Glycine 138 is a binding site for NADP(+). The KARI C-terminal knotted domain occupies 187-332; sequence TFTEETETDL…ARLRALFSWS (146 aa). Residues aspartate 195, glutamate 199, glutamate 231, and glutamate 235 each coordinate Mg(2+). Residue serine 256 coordinates substrate.

Belongs to the ketol-acid reductoisomerase family. It depends on Mg(2+) as a cofactor.

It carries out the reaction (2R)-2,3-dihydroxy-3-methylbutanoate + NADP(+) = (2S)-2-acetolactate + NADPH + H(+). It catalyses the reaction (2R,3R)-2,3-dihydroxy-3-methylpentanoate + NADP(+) = (S)-2-ethyl-2-hydroxy-3-oxobutanoate + NADPH + H(+). It participates in amino-acid biosynthesis; L-isoleucine biosynthesis; L-isoleucine from 2-oxobutanoate: step 2/4. The protein operates within amino-acid biosynthesis; L-valine biosynthesis; L-valine from pyruvate: step 2/4. Its function is as follows. Involved in the biosynthesis of branched-chain amino acids (BCAA). Catalyzes an alkyl-migration followed by a ketol-acid reduction of (S)-2-acetolactate (S2AL) to yield (R)-2,3-dihydroxy-isovalerate. In the isomerase reaction, S2AL is rearranged via a Mg-dependent methyl migration to produce 3-hydroxy-3-methyl-2-ketobutyrate (HMKB). In the reductase reaction, this 2-ketoacid undergoes a metal-dependent reduction by NADPH to yield (R)-2,3-dihydroxy-isovalerate. The sequence is that of Ketol-acid reductoisomerase (NADP(+)) from Tropheryma whipplei (strain Twist) (Whipple's bacillus).